Consider the following 240-residue polypeptide: uncharacterized protein (240 aa).

The disordered stretch occupies residues 26 to 52 (DYVDDGESLPTRQSVKNQREQKKKQGK). Residues 57-77 (LFTVLAVIFVFVPVIVLVTLF) traverse the membrane as a helical segment. Positions 100–185 (KYEVVPKSED…QPAEPVQNVP (86 aa)) are disordered. The span at 103–159 (VVPKSEDKNDTADTKETALQKESKKEPEDSKPKEQTAADKKQTAVAEKEDSPNKEEA) shows a compositional bias: basic and acidic residues. Residues 160 to 185 (TAAAASSSQSTVQQQEQPAEPVQNVP) show a composition bias toward low complexity. The region spanning 189 to 235 (VKHTVQKKETLYRISMKYYKSRTGEEKIRAYNHLNGNDVYTGQVLDI) is the LysM domain.

Its subcellular location is the membrane. This is an uncharacterized protein from Bacillus subtilis (strain 168).